A 133-amino-acid polypeptide reads, in one-letter code: Large-conductance mechanosensitive channel (133 aa).

The next 3 membrane-spanning stretches (helical) occupy residues 8-28 (FAMKGNVVDLAVGVIIGGAFG), 30-50 (IVTSLVNDVIMPILGLILGGI), and 73-93 (GQFIQNILDFLIISFSIFLFI).

It belongs to the MscL family. In terms of assembly, homopentamer.

The protein resides in the cell membrane. Functionally, channel that opens in response to stretch forces in the membrane lipid bilayer. May participate in the regulation of osmotic pressure changes within the cell. In Hathewaya histolytica (Clostridium histolyticum), this protein is Large-conductance mechanosensitive channel.